Reading from the N-terminus, the 139-residue chain is MASAAAGASICIKSASCSPLAPGRISSLRSVSLPVSRKSFPSLRSSKGSFARVSCQAKPETVAKVCRIVKKQLALPDDSEVNGLSKFSALGADSLDTVEIVMGLEEEFGISVEEESAQSIQTVQDAADLIEKLMEKKGH.

The transit peptide at 1-55 (MASAAAGASICIKSASCSPLAPGRISSLRSVSLPVSRKSFPSLRSSKGSFARVSC) directs the protein to the chloroplast. Residues 59 to 134 (PETVAKVCRI…DAADLIEKLM (76 aa)) enclose the Carrier domain. Residue Ser94 is modified to O-(pantetheine 4'-phosphoryl)serine.

Belongs to the acyl carrier protein (ACP) family. Post-translationally, 4'-phosphopantetheine is transferred from CoA to a specific serine of apo-ACP by acpS. This modification is essential for activity because fatty acids are bound in thioester linkage to the sulfhydryl of the prosthetic group.

It localises to the plastid. Its subcellular location is the chloroplast. The protein operates within lipid metabolism; fatty acid biosynthesis. Functionally, carrier of the growing fatty acid chain in fatty acid biosynthesis. This chain is Acyl carrier protein 4, chloroplastic (ACL1), found in Cuphea lanceolata (Cigar flower).